The primary structure comprises 919 residues: Translation initiation factor IF-2 (919 aa).

Basic and acidic residues predominate over residues 93–107 (MGKALPEEVPEKIAP). Disordered regions lie at residues 93 to 145 (MGKA…PAEP) and 158 to 279 (KIQP…RKGE). Residues 136-145 (LAPPEKPAEP) show a composition bias toward pro residues. The span at 158 to 171 (KIQPPEKFAEEPLK) shows a compositional bias: basic and acidic residues. The segment covering 172 to 193 (KPAVIEPEKAAAAPKAVPGEAK) has biased composition (low complexity). Basic and acidic residues-rich tracts occupy residues 194–203 (PLPRTERVQE) and 256–279 (GAPKTEAEKPRKKIKLPDETRKGE). Residues 420-589 (PRAPVVTIMG…LLQADVLELK (170 aa)) form the tr-type G domain. The tract at residues 429 to 436 (GHVDHGKT) is G1. 429–436 (GHVDHGKT) lines the GTP pocket. Residues 454–458 (GITQA) form a G2 region. Residues 475–478 (DTPG) form a G3 region. GTP contacts are provided by residues 475 to 479 (DTPGH) and 529 to 532 (NKID). The G4 stretch occupies residues 529 to 532 (NKID). The tract at residues 565–567 (SAK) is G5.

The protein belongs to the TRAFAC class translation factor GTPase superfamily. Classic translation factor GTPase family. IF-2 subfamily.

It is found in the cytoplasm. In terms of biological role, one of the essential components for the initiation of protein synthesis. Protects formylmethionyl-tRNA from spontaneous hydrolysis and promotes its binding to the 30S ribosomal subunits. Also involved in the hydrolysis of GTP during the formation of the 70S ribosomal complex. This chain is Translation initiation factor IF-2, found in Syntrophus aciditrophicus (strain SB).